We begin with the raw amino-acid sequence, 803 residues long: Rho guanine nucleotide exchange factor 7 (803 aa).

Residue Met1 is modified to N-acetylmethionine. The region spanning 1–133 is the Calponin-homology (CH) domain; the sequence is MNSAEQTVTW…SLVTLNKVTA (133 aa). Asn2 is subject to N-acetylthreonine. Phosphoserine is present on residues Ser153 and Ser176. In terms of domain architecture, SH3 spans 184–243; the sequence is NNQLVVRAKFNFQQTNEDELSFSKGDVIHVTRVEEGGWWEGTLNGRTGWFPSNYVREVKA. Phosphoserine occurs at positions 249 and 257. Positions 271-451 constitute a DH domain; sequence YYNVVLQNIL…KNLSAQCQEV (181 aa). The region spanning 473 to 578 is the PH domain; the sequence is DIKTLGNVTY…WVEHLQKQTK (106 aa). 3 positions are modified to phosphoserine: Ser518, Cys560, and Val579. The segment at 580 to 655 is disordered; the sequence is TSVGNPTIKP…TPKPWSLSCL (76 aa). Positions 593–606 are enriched in polar residues; it reads PSHTLPSHPVTPSS. Phosphoserine occurs at positions 645 and 664. Positions 678–690 are enriched in basic residues; it reads KTMKKLLPKRKPE. Disordered regions lie at residues 678–704 and 748–773; these read KTMK…RKST and DDQP…LSED. Positions 691-700 are enriched in basic and acidic residues; that stretch reads RKPSDEEFAS. Phosphoserine; by CaMK1 is present on Ser694. Residues 752 to 765 show a composition bias toward low complexity; the sequence is SLDSLGRRSSLSRL.

As to quaternary structure, interacts with PAK kinases through the SH3 domain. Interacts with GIT1 and TGFB1I1. Interacts with PTK2/FAK1 and RAC1. Interacts with ITCH and PARVB. Interacts with unphosphorylated PAK1. Interacts with SCRIB; interaction is direct and may play a role in regulation of apoptosis. Interacts with FRMPD4 (via N-terminus). Interacts with CaMK1. Interacts with BIN2. Interacts with YWHAZ. Interacts (via PH domain) with NOX1 (via FAD-binding FR-type domain). In terms of assembly, interacts with SNX27. In terms of processing, phosphorylated by PTK2/FAK1; this promotes interaction with RAC1. Phosphorylated on Ser-694 by CaMK1; enhancement of GEF activity and downstream activation of RAC1.

It localises to the cell junction. Its subcellular location is the focal adhesion. The protein localises to the cell projection. The protein resides in the ruffle. It is found in the cytoplasm. It localises to the cell cortex. Its subcellular location is the lamellipodium. In terms of biological role, acts as a RAC1 guanine nucleotide exchange factor (GEF) and can induce membrane ruffling. Functions in cell migration, attachment and cell spreading. Promotes targeting of RAC1 to focal adhesions. May function as a positive regulator of apoptosis. Downstream of NMDA receptors and CaMKK-CaMK1 signaling cascade, promotes the formation of spines and synapses in hippocampal neurons. The polypeptide is Rho guanine nucleotide exchange factor 7 (ARHGEF7) (Homo sapiens (Human)).